Reading from the N-terminus, the 476-residue chain is Glycogen synthase (476 aa).

Lysine 15 is an ADP-alpha-D-glucose binding site.

This sequence belongs to the glycosyltransferase 1 family. Bacterial/plant glycogen synthase subfamily.

The enzyme catalyses [(1-&gt;4)-alpha-D-glucosyl](n) + ADP-alpha-D-glucose = [(1-&gt;4)-alpha-D-glucosyl](n+1) + ADP + H(+). The protein operates within glycan biosynthesis; glycogen biosynthesis. In terms of biological role, synthesizes alpha-1,4-glucan chains using ADP-glucose. This is Glycogen synthase from Chlamydia pneumoniae (Chlamydophila pneumoniae).